Reading from the N-terminus, the 707-residue chain is DNA topoisomerase 1 (707 aa).

A Toprim domain is found at 1–140 (MYAILAEKPS…IKRLWTSSMT (140 aa)). Residues 157 to 596 (TLPLYYQAKA…HSKKLSSVLF (440 aa)) form the Topo IA-type catalytic domain. Residues 199–204 (SLGRVQ) form an interaction with DNA region. Y323 (O-(5'-phospho-DNA)-tyrosine intermediate) is an active-site residue.

The protein belongs to the type IA topoisomerase family. Monomer.

The catalysed reaction is ATP-independent breakage of single-stranded DNA, followed by passage and rejoining.. Releases the supercoiling and torsional tension of DNA, which is introduced during the DNA replication and transcription, by transiently cleaving and rejoining one strand of the DNA duplex. Introduces a single-strand break via transesterification at a target site in duplex DNA. The scissile phosphodiester is attacked by the catalytic tyrosine of the enzyme, resulting in the formation of a DNA-(5'-phosphotyrosyl)-enzyme intermediate and the expulsion of a 3'-OH DNA strand. The free DNA strand then undergoes passage around the unbroken strand, thus removing DNA supercoils. Finally, in the religation step, the DNA 3'-OH attacks the covalent intermediate to expel the active-site tyrosine and restore the DNA phosphodiester backbone. This Alkalihalophilus pseudofirmus (strain ATCC BAA-2126 / JCM 17055 / OF4) (Bacillus pseudofirmus) protein is DNA topoisomerase 1 (topA).